We begin with the raw amino-acid sequence, 625 residues long: UvrABC system protein C (625 aa).

The GIY-YIG domain occupies 26–105 (LEPGVYFLRD…IKQHQPHFNT (80 aa)). In terms of domain architecture, UVR spans 215-250 (GELLEKLATKMLAASENLDFEQAATIRDQIRGLQAL).

This sequence belongs to the UvrC family. As to quaternary structure, interacts with UvrB in an incision complex.

The protein resides in the cytoplasm. Its function is as follows. The UvrABC repair system catalyzes the recognition and processing of DNA lesions. UvrC both incises the 5' and 3' sides of the lesion. The N-terminal half is responsible for the 3' incision and the C-terminal half is responsible for the 5' incision. The protein is UvrABC system protein C of Microcystis aeruginosa (strain NIES-843 / IAM M-2473).